A 211-amino-acid polypeptide reads, in one-letter code: ATP phosphoribosyltransferase (211 aa).

Belongs to the ATP phosphoribosyltransferase family. Short subfamily. As to quaternary structure, heteromultimer composed of HisG and HisZ subunits.

It localises to the cytoplasm. It catalyses the reaction 1-(5-phospho-beta-D-ribosyl)-ATP + diphosphate = 5-phospho-alpha-D-ribose 1-diphosphate + ATP. It participates in amino-acid biosynthesis; L-histidine biosynthesis; L-histidine from 5-phospho-alpha-D-ribose 1-diphosphate: step 1/9. Functionally, catalyzes the condensation of ATP and 5-phosphoribose 1-diphosphate to form N'-(5'-phosphoribosyl)-ATP (PR-ATP). Has a crucial role in the pathway because the rate of histidine biosynthesis seems to be controlled primarily by regulation of HisG enzymatic activity. This chain is ATP phosphoribosyltransferase, found in Hahella chejuensis (strain KCTC 2396).